We begin with the raw amino-acid sequence, 415 residues long: Peptide chain release factor subunit 1 (415 aa).

It belongs to the eukaryotic release factor 1 family. Heterodimer of two subunits, one of which binds GTP.

It localises to the cytoplasm. Directs the termination of nascent peptide synthesis (translation) in response to the termination codons UAA, UAG and UGA. The chain is Peptide chain release factor subunit 1 from Methanosarcina mazei (strain ATCC BAA-159 / DSM 3647 / Goe1 / Go1 / JCM 11833 / OCM 88) (Methanosarcina frisia).